We begin with the raw amino-acid sequence, 184 residues long: MSTQNSAYSAFSSLLAEAAMPVSPAELHGHLLGRVCAGAGFDEAAWQHAAAELLGGAPGERLKAALSGLLGMVRQDFSAGEVAVVMLLPDDETPLAQRTEALGQWCQGFLAGFGLTAREGSLTGEAEEVLQDMAAIAQVQGQLEDSEDGETDYMEVMEYLRVAPLLLFAECGKPLEPAPKPSLH.

This sequence belongs to the UPF0149 family.

The polypeptide is UPF0149 protein PA14_69010 (Pseudomonas aeruginosa (strain UCBPP-PA14)).